Reading from the N-terminus, the 256-residue chain is Thiazole synthase (256 aa).

Catalysis depends on K95, which acts as the Schiff-base intermediate with DXP. 1-deoxy-D-xylulose 5-phosphate is bound by residues G156, 182–183 (AG), and 204–205 (NT).

This sequence belongs to the ThiG family. As to quaternary structure, homotetramer. Forms heterodimers with either ThiH or ThiS.

The protein resides in the cytoplasm. It catalyses the reaction [ThiS sulfur-carrier protein]-C-terminal-Gly-aminoethanethioate + 2-iminoacetate + 1-deoxy-D-xylulose 5-phosphate = [ThiS sulfur-carrier protein]-C-terminal Gly-Gly + 2-[(2R,5Z)-2-carboxy-4-methylthiazol-5(2H)-ylidene]ethyl phosphate + 2 H2O + H(+). The protein operates within cofactor biosynthesis; thiamine diphosphate biosynthesis. Catalyzes the rearrangement of 1-deoxy-D-xylulose 5-phosphate (DXP) to produce the thiazole phosphate moiety of thiamine. Sulfur is provided by the thiocarboxylate moiety of the carrier protein ThiS. In vitro, sulfur can be provided by H(2)S. This is Thiazole synthase from Salmonella typhi.